Consider the following 392-residue polypeptide: Protein SRL2 (392 aa).

Serine 11 bears the Phosphoserine mark. The interval 18 to 52 (KPSETPKMEEEKLEVTNVNASSSKKVHKSKKSTSK) is disordered. Residues 21–31 (ETPKMEEEKLE) are compositionally biased toward basic and acidic residues. Residues 41-50 (KKVHKSKKST) are compositionally biased toward basic residues. A Phosphoserine modification is found at serine 139. Residues 284–303 (EDSTAVTNENGHISSEKNLK) are disordered. The segment covering 287 to 296 (TAVTNENGHI) has biased composition (polar residues).

Its subcellular location is the cytoplasm. It localises to the nucleus. This Saccharomyces cerevisiae (strain ATCC 204508 / S288c) (Baker's yeast) protein is Protein SRL2 (SRL2).